The primary structure comprises 108 residues: Nucleoid-associated protein GWCH70_0020 (108 aa).

A disordered region spans residues Met-1–Thr-34. Low complexity predominate over residues Met-9–Lys-18. A compositionally biased stretch (basic and acidic residues) spans Met-19–Thr-34.

It belongs to the YbaB/EbfC family. In terms of assembly, homodimer.

It localises to the cytoplasm. It is found in the nucleoid. Functionally, binds to DNA and alters its conformation. May be involved in regulation of gene expression, nucleoid organization and DNA protection. The chain is Nucleoid-associated protein GWCH70_0020 from Geobacillus sp. (strain WCH70).